The sequence spans 628 residues: Probable potassium transport system protein Kup (628 aa).

A run of 12 helical transmembrane segments spans residues 15-35 (LAIA…LYSL), 55-75 (VISL…VLFV), 104-124 (AGLL…DAVI), 142-162 (PHLS…LFWI), 173-193 (LFGP…LWHI), 210-230 (TFMA…VLVL), 252-272 (WYVL…ALLM), 281-301 (PFFL…STIA), 342-362 (IYVP…VIAF), 372-392 (YGIA…VVMV), 400-420 (LLVA…FGAN), and 426-446 (EGGW…MTWY).

It belongs to the HAK/KUP transporter (TC 2.A.72) family.

It is found in the cell inner membrane. The enzyme catalyses K(+)(in) + H(+)(in) = K(+)(out) + H(+)(out). Its function is as follows. Transport of potassium into the cell. Likely operates as a K(+):H(+) symporter. The protein is Probable potassium transport system protein Kup of Paraburkholderia xenovorans (strain LB400).